We begin with the raw amino-acid sequence, 311 residues long: Formimidoylglutamase (311 aa).

Residues histidine 130, aspartate 155, histidine 157, aspartate 159, cysteine 242, and aspartate 244 each contribute to the Mn(2+) site.

The protein belongs to the arginase family. It depends on Mn(2+) as a cofactor.

The catalysed reaction is N-formimidoyl-L-glutamate + H2O = formamide + L-glutamate. It functions in the pathway amino-acid degradation; L-histidine degradation into L-glutamate; L-glutamate from N-formimidoyl-L-glutamate (hydrolase route): step 1/1. Its function is as follows. Catalyzes the conversion of N-formimidoyl-L-glutamate to L-glutamate and formamide. The sequence is that of Formimidoylglutamase from Staphylococcus aureus (strain MSSA476).